Here is a 289-residue protein sequence, read N- to C-terminus: Phosphatidylserine decarboxylase proenzyme (289 aa).

Active-site charge relay system; for autoendoproteolytic cleavage activity residues include Asp-89, His-146, and Ser-252. Ser-252 serves as the catalytic Schiff-base intermediate with substrate; via pyruvic acid; for decarboxylase activity. Ser-252 is modified (pyruvic acid (Ser); by autocatalysis).

Belongs to the phosphatidylserine decarboxylase family. PSD-B subfamily. Prokaryotic type I sub-subfamily. In terms of assembly, heterodimer of a large membrane-associated beta subunit and a small pyruvoyl-containing alpha subunit. Pyruvate is required as a cofactor. Post-translationally, is synthesized initially as an inactive proenzyme. Formation of the active enzyme involves a self-maturation process in which the active site pyruvoyl group is generated from an internal serine residue via an autocatalytic post-translational modification. Two non-identical subunits are generated from the proenzyme in this reaction, and the pyruvate is formed at the N-terminus of the alpha chain, which is derived from the carboxyl end of the proenzyme. The autoendoproteolytic cleavage occurs by a canonical serine protease mechanism, in which the side chain hydroxyl group of the serine supplies its oxygen atom to form the C-terminus of the beta chain, while the remainder of the serine residue undergoes an oxidative deamination to produce ammonia and the pyruvoyl prosthetic group on the alpha chain. During this reaction, the Ser that is part of the protease active site of the proenzyme becomes the pyruvoyl prosthetic group, which constitutes an essential element of the active site of the mature decarboxylase.

The protein localises to the cell membrane. It carries out the reaction a 1,2-diacyl-sn-glycero-3-phospho-L-serine + H(+) = a 1,2-diacyl-sn-glycero-3-phosphoethanolamine + CO2. Its pathway is phospholipid metabolism; phosphatidylethanolamine biosynthesis; phosphatidylethanolamine from CDP-diacylglycerol: step 2/2. Catalyzes the formation of phosphatidylethanolamine (PtdEtn) from phosphatidylserine (PtdSer). The protein is Phosphatidylserine decarboxylase proenzyme of Shewanella denitrificans (strain OS217 / ATCC BAA-1090 / DSM 15013).